The primary structure comprises 282 residues: Pantothenate synthetase (282 aa).

30–37 (MGFLHDGH) is a binding site for ATP. The active-site Proton donor is the histidine 37. Glutamine 60 lines the (R)-pantoate pocket. Residue glutamine 60 coordinates beta-alanine. Position 146–149 (146–149 (GQKD)) interacts with ATP. Glutamine 152 is a (R)-pantoate binding site. ATP-binding positions include isoleucine 175 and 183-186 (KSSR).

This sequence belongs to the pantothenate synthetase family. In terms of assembly, homodimer.

It is found in the cytoplasm. The catalysed reaction is (R)-pantoate + beta-alanine + ATP = (R)-pantothenate + AMP + diphosphate + H(+). Its pathway is cofactor biosynthesis; (R)-pantothenate biosynthesis; (R)-pantothenate from (R)-pantoate and beta-alanine: step 1/1. In terms of biological role, catalyzes the condensation of pantoate with beta-alanine in an ATP-dependent reaction via a pantoyl-adenylate intermediate. The protein is Pantothenate synthetase of Campylobacter jejuni (strain RM1221).